Here is a 502-residue protein sequence, read N- to C-terminus: Glycerol kinase (502 aa).

Thr-13 serves as a coordination point for ADP. ATP is bound by residues Thr-13, Thr-14, and Ser-15. Thr-13 is a sn-glycerol 3-phosphate binding site. Position 17 (Arg-17) interacts with ADP. Residues Arg-83, Glu-84, Tyr-136, and Asp-246 each coordinate sn-glycerol 3-phosphate. Positions 83, 84, 136, 246, and 247 each coordinate glycerol. ADP-binding residues include Thr-268 and Gly-311. ATP contacts are provided by Thr-268, Gly-311, Gln-315, and Gly-412. The ADP site is built by Gly-412 and Asn-416.

Belongs to the FGGY kinase family.

It carries out the reaction glycerol + ATP = sn-glycerol 3-phosphate + ADP + H(+). It functions in the pathway polyol metabolism; glycerol degradation via glycerol kinase pathway; sn-glycerol 3-phosphate from glycerol: step 1/1. Inhibited by fructose 1,6-bisphosphate (FBP). In terms of biological role, key enzyme in the regulation of glycerol uptake and metabolism. Catalyzes the phosphorylation of glycerol to yield sn-glycerol 3-phosphate. In Francisella tularensis subsp. mediasiatica (strain FSC147), this protein is Glycerol kinase.